The chain runs to 152 residues: Large ribosomal subunit protein bL9 (152 aa).

The protein belongs to the bacterial ribosomal protein bL9 family.

Its function is as follows. Binds to the 23S rRNA. In Acaryochloris marina (strain MBIC 11017), this protein is Large ribosomal subunit protein bL9.